We begin with the raw amino-acid sequence, 366 residues long: Holliday junction branch migration complex subunit RuvB (366 aa).

The tract at residues 3-183 (ADGLVSAAAS…FGFTAHLDFY (181 aa)) is large ATPase domain (RuvB-L). ATP is bound by residues Leu-22, Arg-23, Gly-64, Lys-67, Thr-68, Ser-69, 130–132 (EDF), Arg-173, Tyr-183, and Arg-220. Residue Thr-68 coordinates Mg(2+). A small ATPAse domain (RuvB-S) region spans residues 184–254 (APDELARVLT…VARAALRIYD (71 aa)). The interval 257-366 (GLGLDRLDRA…PEDGLHPGGG (110 aa)) is head domain (RuvB-H). Arg-312 and Arg-317 together coordinate DNA.

Belongs to the RuvB family. In terms of assembly, homohexamer. Forms an RuvA(8)-RuvB(12)-Holliday junction (HJ) complex. HJ DNA is sandwiched between 2 RuvA tetramers; dsDNA enters through RuvA and exits via RuvB. An RuvB hexamer assembles on each DNA strand where it exits the tetramer. Each RuvB hexamer is contacted by two RuvA subunits (via domain III) on 2 adjacent RuvB subunits; this complex drives branch migration. In the full resolvosome a probable DNA-RuvA(4)-RuvB(12)-RuvC(2) complex forms which resolves the HJ.

Its subcellular location is the cytoplasm. The enzyme catalyses ATP + H2O = ADP + phosphate + H(+). The RuvA-RuvB-RuvC complex processes Holliday junction (HJ) DNA during genetic recombination and DNA repair, while the RuvA-RuvB complex plays an important role in the rescue of blocked DNA replication forks via replication fork reversal (RFR). RuvA specifically binds to HJ cruciform DNA, conferring on it an open structure. The RuvB hexamer acts as an ATP-dependent pump, pulling dsDNA into and through the RuvAB complex. RuvB forms 2 homohexamers on either side of HJ DNA bound by 1 or 2 RuvA tetramers; 4 subunits per hexamer contact DNA at a time. Coordinated motions by a converter formed by DNA-disengaged RuvB subunits stimulates ATP hydrolysis and nucleotide exchange. Immobilization of the converter enables RuvB to convert the ATP-contained energy into a lever motion, pulling 2 nucleotides of DNA out of the RuvA tetramer per ATP hydrolyzed, thus driving DNA branch migration. The RuvB motors rotate together with the DNA substrate, which together with the progressing nucleotide cycle form the mechanistic basis for DNA recombination by continuous HJ branch migration. Branch migration allows RuvC to scan DNA until it finds its consensus sequence, where it cleaves and resolves cruciform DNA. The protein is Holliday junction branch migration complex subunit RuvB of Frankia alni (strain DSM 45986 / CECT 9034 / ACN14a).